Here is a 64-residue protein sequence, read N- to C-terminus: MRCVPVFIILLLLIASAPGVDAQPKTKYNAPLTSLHDNAKGILQEHWNKRCCPRRLACCIIGRK.

The signal sequence occupies residues 1-22 (MRCVPVFIILLLLIASAPGVDA). A propeptide spanning residues 23–48 (QPKTKYNAPLTSLHDNAKGILQEHWN) is cleaved from the precursor. Residue I61 is modified to Isoleucine amide.

It belongs to the conotoxin T superfamily. In terms of processing, contains 2 disulfide bonds that can be either 'C1-C3, C2-C4' or 'C1-C4, C2-C3', since these disulfide connectivities have been observed for conotoxins with cysteine framework V (for examples, see AC P0DQQ7 and AC P81755). In terms of tissue distribution, expressed by the venom duct.

It is found in the secreted. This Conus caracteristicus (Characteristic cone) protein is Conotoxin Ca5.3.